A 286-amino-acid chain; its full sequence is 33 kDa chaperonin (286 aa).

Disulfide bonds link C225-C227 and C258-C261.

It belongs to the HSP33 family. In terms of processing, under oxidizing conditions two disulfide bonds are formed involving the reactive cysteines. Under reducing conditions zinc is bound to the reactive cysteines and the protein is inactive.

It localises to the cytoplasm. Functionally, redox regulated molecular chaperone. Protects both thermally unfolding and oxidatively damaged proteins from irreversible aggregation. Plays an important role in the bacterial defense system toward oxidative stress. The protein is 33 kDa chaperonin of Shewanella sp. (strain ANA-3).